The sequence spans 261 residues: Kallikrein 1-related peptidase b26 (261 aa).

The first 18 residues, 1–18 (MWFLILFPALSLGGIDAA), serve as a signal peptide directing secretion. Positions 19–24 (PPLQSR) are cleaved as a propeptide — activation peptide. Residues 25-258 (VVGGFNCEKN…FNSWIKDTMM (234 aa)) enclose the Peptidase S1 domain. 5 disulfides stabilise this stretch: Cys31-Cys173, Cys50-Cys66, Cys152-Cys219, Cys184-Cys198, and Cys209-Cys234. Catalysis depends on His65, which acts as the Charge relay system. The N-linked (GlcNAc...) asparagine glycan is linked to Asn102. Asp120 (charge relay system) is an active-site residue. Residue Ser213 is the Charge relay system of the active site.

It belongs to the peptidase S1 family. Kallikrein subfamily.

The catalysed reaction is Preferential cleavage of Arg-|-Xaa bonds in small molecule substrates. Highly selective action to release kallidin (lysyl-bradykinin) from kininogen involves hydrolysis of Met-|-Xaa or Leu-|-Xaa.. Functionally, glandular kallikreins cleave Met-Lys and Arg-Ser bonds in kininogen to release Lys-bradykinin. Its function is as follows. Prorenin-converting enzyme cleaves mouse REN-2 prorenin at a dibasic site to yield mature renin. The sequence is that of Kallikrein 1-related peptidase b26 (Klk1b26) from Mus musculus (Mouse).